Consider the following 424-residue polypeptide: Protein ImpB (424 aa).

The UmuC domain maps to 2-189 (FALADINSFY…QPVGEVWGVG (188 aa)).

Belongs to the DNA polymerase type-Y family.

Functionally, involved in UV protection and mutation. This chain is Protein ImpB (impB), found in Salmonella typhimurium.